Consider the following 385-residue polypeptide: Tuliposide A-converting enzyme 1, chloroplastic (385 aa).

The transit peptide at 1-77 directs the protein to the chloroplast; the sequence is MSVASFFSSL…PSPSLSPTPT (77 aa). The active-site Acyl-ester intermediate is the Ser-235. Active-site charge relay system residues include Asp-327 and His-359.

This sequence belongs to the AB hydrolase superfamily. In terms of assembly, homodimer. In terms of tissue distribution, expressed in roots, stems, leaves, petals, stamens and pistils, but not in bulb scales.

Its subcellular location is the plastid. The protein resides in the chloroplast. It catalyses the reaction 6-tuliposide A = tulipalin A + D-glucose. Inhibited by NaF, AgNO(3), HgCl(2), CuSO(4) and phenylmethylsulfonyl fluoride (PMSF). Functionally, lactone-forming carboxylesterases, specifically catalyzing intramolecular transesterification, but not hydrolysis. Involved in the biosynthesis of tulipalins, defensive chemicals that show antimicrobial activities against a broad range of strains of bacteria and fungi. Substrates are 6-tuliposide A &gt; 6-tuliposide B. The polypeptide is Tuliposide A-converting enzyme 1, chloroplastic (TCEA1) (Tulipa gesneriana (Garden tulip)).